The chain runs to 137 residues: Nucleoside diphosphate kinase (137 aa).

Residues K9, F57, R85, T91, R102, and N112 each contribute to the ATP site. H115 (pros-phosphohistidine intermediate) is an active-site residue.

It belongs to the NDK family. In terms of assembly, homotetramer. It depends on Mg(2+) as a cofactor.

Its subcellular location is the cytoplasm. It carries out the reaction a 2'-deoxyribonucleoside 5'-diphosphate + ATP = a 2'-deoxyribonucleoside 5'-triphosphate + ADP. The catalysed reaction is a ribonucleoside 5'-diphosphate + ATP = a ribonucleoside 5'-triphosphate + ADP. Functionally, major role in the synthesis of nucleoside triphosphates other than ATP. The ATP gamma phosphate is transferred to the NDP beta phosphate via a ping-pong mechanism, using a phosphorylated active-site intermediate. This is Nucleoside diphosphate kinase from Sulfurimonas denitrificans (strain ATCC 33889 / DSM 1251) (Thiomicrospira denitrificans (strain ATCC 33889 / DSM 1251)).